Consider the following 144-residue polypeptide: MNFKYIVAVSFLIASAYARSVQNDEQSLSQRDVLEEESLREIRGIGGKILSGLKTALKGAAKELASTYLHRKRTAEEHEVMKRLEAVMRDLDSLDYPEEASERETRGFNQDEIANLFTKKEKRILGPVLSLVGNALGGLIKKIG.

The N-terminal stretch at 1–18 is a signal peptide; that stretch reads MNFKYIVAVSFLIASAYA. 2 propeptides span residues 19–43 and 73–122; these read RSVQNDEQSLSQRDVLEEESLREIR and RTAE…KKEK. I143 carries the isoleucine amide modification.

The protein belongs to the bombinin family. Expressed by the skin glands.

It localises to the secreted. In terms of biological role, maximin-3 shows antibacterial activity against both Gram-positive and Gram-negative bacteria. It also shows antimicrobial activity against the fungus C.albicans, but not against A.flavus nor P.uticale. It has little hemolytic activity. It possess a significant cytotoxicity against tumor cell lines. It possess a significant anti-HIV activity. It shows high spermicidal activity. Maximin-H16 shows antimicrobial activity against bacteria and against the fungus C.albicans. Shows strong hemolytic activity. The chain is Maximins 3/H16 from Bombina maxima (Giant fire-bellied toad).